The sequence spans 121 residues: Small ribosomal subunit protein uS13 (121 aa).

Residues 89–121 (MRHRRGLPVRGQNTKNNARTRKGKKVSIAGKKK) are disordered. Basic residues predominate over residues 106-121 (ARTRKGKKVSIAGKKK).

The protein belongs to the universal ribosomal protein uS13 family. Part of the 30S ribosomal subunit. Forms a loose heterodimer with protein S19. Forms two bridges to the 50S subunit in the 70S ribosome.

Its function is as follows. Located at the top of the head of the 30S subunit, it contacts several helices of the 16S rRNA. In the 70S ribosome it contacts the 23S rRNA (bridge B1a) and protein L5 of the 50S subunit (bridge B1b), connecting the 2 subunits; these bridges are implicated in subunit movement. Contacts the tRNAs in the A and P-sites. The chain is Small ribosomal subunit protein uS13 from Latilactobacillus sakei subsp. sakei (strain 23K) (Lactobacillus sakei subsp. sakei).